The following is a 921-amino-acid chain: Probable dipeptidyl-aminopeptidase B (921 aa).

2 disordered regions span residues 1–33 (MAGHPEENAQLLSTEQESMSRNSSDSVASTAST) and 45–66 (VAANGSEKPTMVTPKFPPRGER). The Cytoplasmic segment spans residues 1-109 (MAGHPEENAQ…NKSVDKKLRR (109 aa)). Over residues 10-22 (QLLSTEQESMSRN) the composition is skewed to polar residues. Over residues 23–33 (SSDSVASTAST) the composition is skewed to low complexity. Residues 110-130 (LIWIIGGVFIGAWVLALFIFL) traverse the membrane as a helical; Signal-anchor for type II membrane protein segment. Over 131–921 (GKQAYKHSSE…VPLEIDAAKV (791 aa)) the chain is Vacuolar. A disordered region spans residues 138 to 157 (SSESPHDPQATSSRGSGKKV). Residue N362 is glycosylated (N-linked (GlcNAc...) asparagine). The active-site Charge relay system is S768. A glycan (N-linked (GlcNAc...) asparagine) is linked at N822. Active-site charge relay system residues include D845 and H878.

This sequence belongs to the peptidase S9B family.

It is found in the vacuole membrane. It carries out the reaction Release of an N-terminal dipeptide, Xaa-Yaa-|-Zaa-, from a polypeptide, preferentially when Yaa is Pro, provided Zaa is neither Pro nor hydroxyproline.. In terms of biological role, type IV dipeptidyl-peptidase which removes N-terminal dipeptides sequentially from polypeptides having unsubstituted N-termini provided that the penultimate residue is proline. This chain is Probable dipeptidyl-aminopeptidase B (dapB), found in Botryotinia fuckeliana (strain B05.10) (Noble rot fungus).